The sequence spans 357 residues: Sorbitol dehydrogenase (357 aa).

Alanine 2 is modified (N-acetylalanine). A Zn(2+)-binding site is contributed by cysteine 45. Tyrosine 51 is a binding site for substrate. Histidine 70 and glutamate 71 together coordinate Zn(2+). Glutamate 156 lines the substrate pocket. The NAD(+) site is built by isoleucine 184, aspartate 204, and arginine 209. A phosphoserine mark is found at serine 211 and serine 225. NAD(+)-binding positions include 273–275 and 297–299; these read VGL and VFR. Residues arginine 299 and tyrosine 300 each contribute to the substrate site.

This sequence belongs to the zinc-containing alcohol dehydrogenase family. As to quaternary structure, homotetramer. Zn(2+) is required as a cofactor.

The protein resides in the mitochondrion membrane. Its subcellular location is the cell projection. The protein localises to the cilium. It is found in the flagellum. The catalysed reaction is xylitol + NAD(+) = D-xylulose + NADH + H(+). It carries out the reaction L-iditol + NAD(+) = keto-L-sorbose + NADH + H(+). It catalyses the reaction keto-D-fructose + NADH + H(+) = D-sorbitol + NAD(+). Polyol dehydrogenase that catalyzes the reversible NAD(+)-dependent oxidation of various sugar alcohols. Is active with xylitol, L-iditol and D-sorbitol (D-glucitol) as substrates, leading to the C2-oxidized products D-xylulose, L-sorbose and D-fructose, respectively. Is a key enzyme in the polyol pathway that interconverts glucose and fructose via sorbitol, which constitutes an important alternate route for glucose metabolism. May play a role in sperm motility by using sorbitol as an alternative energy source for sperm motility. The sequence is that of Sorbitol dehydrogenase (SORD) from Pongo abelii (Sumatran orangutan).